The following is a 1037-amino-acid chain: Multidrug resistance protein MdtF (1037 aa).

Over 1–9 (MANYFIDRP) the chain is Cytoplasmic. The chain crosses the membrane as a helical span at residues 10–28 (VFAWVLAIIMMLAGGLAIM). Residues 29-339 (NLPVAQYPQI…TPFIEISIQE (311 aa)) are Periplasmic-facing. The helical transmembrane segment at 340 to 359 (VFKTLVEAIILVFLVMYLFL) threads the bilayer. The Cytoplasmic segment spans residues 360–365 (QNFRAT). A helical membrane pass occupies residues 366–385 (IIPTIAVPVVILGTFAILSA). Over 386–391 (VGFTIN) the chain is Periplasmic. The chain crosses the membrane as a helical span at residues 392–413 (TLTMFGMVLAIGLLVDDAIVVV). Over 414-441 (ENVERVIAEDKLPPKEATHKSMGQIQRA) the chain is Cytoplasmic. Residues 442 to 460 (LVGIAVVLSAVFMPMAFMS) traverse the membrane as a helical segment. The Periplasmic segment spans residues 461 to 473 (GATGEIYRQFSIT). Residues 474–496 (LISSMLLSVFVAMSLTPALCATI) form a helical membrane-spanning segment. Residues 497-536 (LKAAPEGGHKPNALFARFNTLFEKSTQHYTDSTRSLLRCT) are Cytoplasmic-facing. Residues 537–555 (GRYMVVYLLICAGMAVLFL) traverse the membrane as a helical segment. The Periplasmic segment spans residues 556–870 (RTPTSFLPEE…SYQEALSSNQ (315 aa)). The helical transmembrane segment at 871 to 890 (APALYAISLVVVFLALAALY) threads the bilayer. Residues 891–896 (ESWSIP) are Cytoplasmic-facing. Residues 897 to 916 (FSVMLVVPLGVVGALLATDL) form a helical membrane-spanning segment. Residues 917–922 (RGLSND) are Periplasmic-facing. The chain crosses the membrane as a helical span at residues 923–944 (VYFQVGLLTTIGLSAKNAILIV). Over 945-972 (EFAVEMMQKEGKTPIEAIIEAARMRLRP) the chain is Cytoplasmic. Residues 973 to 991 (ILMTSLAFILGVLPLVISH) form a helical membrane-spanning segment. Over 992–1004 (GAGSGAQNAVGTG) the chain is Periplasmic. Residues 1005-1027 (VMGGMFAATVLAIYFVPVFFVVV) form a helical membrane-spanning segment. Residues 1028 to 1037 (EHLFARFKKA) are Cytoplasmic-facing.

This sequence belongs to the resistance-nodulation-cell division (RND) (TC 2.A.6) family. Homotrimer. Part of the tripartite efflux system MdtEF-TolC, which is composed of an inner membrane transporter, MdtF, a membrane fusion protein, MdtE, and an outer membrane component, TolC. The complex forms a large protein conduit and can translocate molecules across both the inner and outer membranes.

It is found in the cell inner membrane. Functionally, part of the tripartite efflux system MdtEF-TolC, which confers resistance to compounds such as rhodamine 6G, erythromycin, doxorubicin, ethidium bromide, TPP, SDS, deoxycholate, crystal violet and benzalkonium. The chain is Multidrug resistance protein MdtF (mdtF) from Escherichia coli (strain K12).